Reading from the N-terminus, the 1492-residue chain is Copper-transporting ATPase 1 (1492 aa).

The Cytoplasmic portion of the chain corresponds to 1-645 (MEPNMDANSI…KREIKQWRGS (645 aa)). HMA domains follow at residues 8-74 (NSIT…FDAL) and 85-151 (TNTV…LDMG). Cu(+) is bound by residues threonine 18, cysteine 19, and cysteine 22. Position 152 is a phosphothreonine (threonine 152). Positions 171 to 237 (VLLKMRVEGM…QIEAVGFPAF (67 aa)) constitute an HMA 3 domain. Residues cysteine 182 and cysteine 185 each contribute to the Cu(+) site. The residue at position 270 (serine 270) is a Phosphoserine. One can recognise an HMA 4 domain in the interval 277–343 (SAITFTIDGM…AIEAVSPGQY (67 aa)). Residues cysteine 288 and cysteine 291 each coordinate Cu(+). Position 327 is a phosphothreonine (threonine 327). A phosphoserine mark is found at serine 339, serine 353, serine 357, and serine 362. HMA domains are found at residues 377-443 (QEVV…FDAV), 480-546 (NKCY…FGAV), and 556-622 (GILE…FEAS). Cu(+)-binding residues include cysteine 388, cysteine 391, cysteine 491, cysteine 494, cysteine 567, and cysteine 570. A helical transmembrane segment spans residues 646–667 (FLVSLFFCIPVMGLMIYMMVMD). Over 668-706 (HHLATLNHNQNMSNEEMINMHSSMFLERQILPGLSIMNL) the chain is Extracellular. A glycan (N-linked (GlcNAc...) asparagine) is linked at asparagine 678. The chain crosses the membrane as a helical span at residues 707–726 (LSLLLCLPVQFCGGWYFYIQ). The Cytoplasmic portion of the chain corresponds to 727-733 (AYKALRH). The chain crosses the membrane as a helical span at residues 734-754 (KTANMDVLIVLATTIAFAYSL). The Extracellular segment spans residues 755-773 (VILLVAMYERAKVNPITFF). The chain crosses the membrane as a helical span at residues 774–794 (DTPPMLFVFIALGRWLEHIAK). The Cytoplasmic portion of the chain corresponds to 795–927 (GKTSEALAKL…SKAPIQQFAD (133 aa)). Residues 928-951 (KLSGYFVPFIVLVSIVTLLVWIII) traverse the membrane as a helical segment. At 952 to 981 (GFQNFEIVEAYFPGYNRSISRTETIIRFAF) the chain is on the extracellular side. A helical membrane pass occupies residues 982–1003 (QASITVLCIACPCSLGLATPTA). At 1004 to 1348 (VMVGTGVGAQ…LSRKTVKRIR (345 aa)) the chain is on the cytoplasmic side. Residue aspartate 1036 is the 4-aspartylphosphate intermediate of the active site. Glutamate 1073 contacts ATP. Position 1204 is a phosphothreonine (threonine 1204). Mg(2+) is bound by residues aspartate 1293 and aspartate 1297. The chain crosses the membrane as a helical span at residues 1349–1366 (INFVFALIYNLIGIPIAA). The Extracellular segment spans residues 1367-1377 (GVFLPIGLVLQ). The chain crosses the membrane as a helical span at residues 1378–1397 (PWMGSAAMAASSVSVVLSSL). The Cytoplasmic segment spans residues 1398–1492 (FLKLYRKPTY…DFREDDDTTL (95 aa)). A phosphoserine mark is found at serine 1422, serine 1424, serine 1452, serine 1455, and serine 1458. An Endocytosis signal motif is present at residues 1459–1460 (LL). Residues serine 1461, serine 1465, serine 1468, and serine 1478 each carry the phosphoserine modification. Positions 1478–1492 (SLLVGDFREDDDTTL) are PDZD11-binding. The short motif at 1479–1480 (LL) is the Endocytosis signal element.

The protein belongs to the cation transport ATPase (P-type) (TC 3.A.3) family. Type IB subfamily. In terms of assembly, monomer. Interacts with PDZD11. Interacts with ATOX1 and COMMD1. Interacts with TYRP1. Directly interacts with SOD3; this interaction is copper-dependent and is required for SOD3 activity. Expressed in hippocampal neuron (at protein level). Expressed in anterior pituitary gland (at protein level).

The protein localises to the golgi apparatus. Its subcellular location is the trans-Golgi network membrane. It localises to the cell membrane. The protein resides in the melanosome membrane. It is found in the early endosome membrane. The protein localises to the cell projection. Its subcellular location is the axon. It localises to the dendrite. The protein resides in the postsynaptic density. It catalyses the reaction Cu(+)(in) + ATP + H2O = Cu(+)(out) + ADP + phosphate + H(+). In terms of biological role, ATP-driven copper (Cu(+)) ion pump that plays an important role in intracellular copper ion homeostasis. Within a catalytic cycle, acquires Cu(+) ion from donor protein on the cytoplasmic side of the membrane and delivers it to acceptor protein on the lumenal side. The transfer of Cu(+) ion across the membrane is coupled to ATP hydrolysis and is associated with a transient phosphorylation that shifts the pump conformation from inward-facing to outward-facing state. Under physiological conditions, at low cytosolic copper concentration, it is localized at the trans-Golgi network (TGN) where it transfers Cu(+) ions to cuproenzymes of the secretory pathway. Upon elevated cytosolic copper concentrations, it relocalizes to the plasma membrane where it is responsible for the export of excess Cu(+) ions. May play a dual role in neuron function and survival by regulating cooper efflux and neuronal transmission at the synapse as well as by supplying Cu(+) ions to enzymes such as PAM, TYR and SOD3. In the melanosomes of pigmented cells, provides copper cofactor to TYR to form an active TYR holoenzyme for melanin biosynthesis. In Rattus norvegicus (Rat), this protein is Copper-transporting ATPase 1.